Here is a 135-residue protein sequence, read N- to C-terminus: Transcription antitermination protein NusB (135 aa).

The protein belongs to the NusB family.

In terms of biological role, involved in transcription antitermination. Required for transcription of ribosomal RNA (rRNA) genes. Binds specifically to the boxA antiterminator sequence of the ribosomal RNA (rrn) operons. This is Transcription antitermination protein NusB from Shewanella halifaxensis (strain HAW-EB4).